A 106-amino-acid polypeptide reads, in one-letter code: MSTAIAQQKIRIRLKAFDRRMLDLSCDKIIETADNTAATAIGPIPLPTKRKIYCVLCSPHVDKDSREHFETRTHRRIIDIYNPSAKTIDALMKLDLPSGVDIEVKL.

This sequence belongs to the universal ribosomal protein uS10 family. As to quaternary structure, part of the 30S ribosomal subunit.

Functionally, involved in the binding of tRNA to the ribosomes. The protein is Small ribosomal subunit protein uS10 of Prochlorococcus marinus (strain MIT 9303).